The sequence spans 254 residues: Axonemal dynein light intermediate polypeptide 1 (254 aa).

The segment at 1–55 (MIPPADSLLKHDNPVLISKNTERKSPKSRPLKVSSPQTVLTAPVPPPPKPKTPLL) is disordered. Residues 175–245 (ALQAEQGKSD…KRTNQQLKAQ (71 aa)) are a coiled coil.

Belongs to the inner dynein arm light chain family.

The protein localises to the cell projection. Its subcellular location is the cilium. It localises to the flagellum. It is found in the dynein axonemal particle. The protein resides in the cytoplasm. Involved in sperm flagellum assembly. This chain is Axonemal dynein light intermediate polypeptide 1, found in Xenopus laevis (African clawed frog).